The sequence spans 122 residues: Large ribosomal subunit protein uL14c (122 aa).

It belongs to the universal ribosomal protein uL14 family. Part of the 50S ribosomal subunit.

The protein resides in the plastid. It localises to the chloroplast. Functionally, binds to 23S rRNA. This Buxus microphylla (Littleleaf boxwood) protein is Large ribosomal subunit protein uL14c.